Here is a 709-residue protein sequence, read N- to C-terminus: DNA ligase (709 aa).

The segment at 1–20 (MTATHRGAQADASAPAGPLP) is disordered. Residues 52–56 (DAEYD), 101–102 (SL), and E146 contribute to the NAD(+) site. Residue K148 is the N6-AMP-lysine intermediate of the active site. The NAD(+) site is built by R169, E205, K322, and K346. C440, C443, C458, and C464 together coordinate Zn(2+). One can recognise a BRCT domain in the interval 623–709 (KAPAPLSGKT…AEAGAAPAQE (87 aa)).

The protein belongs to the NAD-dependent DNA ligase family. LigA subfamily. Requires Mg(2+) as cofactor. It depends on Mn(2+) as a cofactor.

It catalyses the reaction NAD(+) + (deoxyribonucleotide)n-3'-hydroxyl + 5'-phospho-(deoxyribonucleotide)m = (deoxyribonucleotide)n+m + AMP + beta-nicotinamide D-nucleotide.. Functionally, DNA ligase that catalyzes the formation of phosphodiester linkages between 5'-phosphoryl and 3'-hydroxyl groups in double-stranded DNA using NAD as a coenzyme and as the energy source for the reaction. It is essential for DNA replication and repair of damaged DNA. The sequence is that of DNA ligase from Cupriavidus necator (strain ATCC 17699 / DSM 428 / KCTC 22496 / NCIMB 10442 / H16 / Stanier 337) (Ralstonia eutropha).